Consider the following 404-residue polypeptide: Cysteine desulfurase IscS (404 aa).

Residues 73–74, Asn-153, Gln-181, and 201–203 contribute to the pyridoxal 5'-phosphate site; these read AT and SAH. Residue Lys-204 is modified to N6-(pyridoxal phosphate)lysine. Pyridoxal 5'-phosphate is bound at residue Thr-241. Cys-327 serves as the catalytic Cysteine persulfide intermediate. Cys-327 lines the [2Fe-2S] cluster pocket.

This sequence belongs to the class-V pyridoxal-phosphate-dependent aminotransferase family. NifS/IscS subfamily. Homodimer. Forms a heterotetramer with IscU, interacts with other sulfur acceptors. Pyridoxal 5'-phosphate serves as cofactor.

The protein localises to the cytoplasm. The catalysed reaction is (sulfur carrier)-H + L-cysteine = (sulfur carrier)-SH + L-alanine. The protein operates within cofactor biosynthesis; iron-sulfur cluster biosynthesis. In terms of biological role, master enzyme that delivers sulfur to a number of partners involved in Fe-S cluster assembly, tRNA modification or cofactor biosynthesis. Catalyzes the removal of elemental sulfur atoms from cysteine to produce alanine. Functions as a sulfur delivery protein for Fe-S cluster synthesis onto IscU, an Fe-S scaffold assembly protein, as well as other S acceptor proteins. The chain is Cysteine desulfurase IscS from Anaeromyxobacter dehalogenans (strain 2CP-C).